Consider the following 339-residue polypeptide: Ferredoxin--NADP reductase (339 aa).

FAD-binding residues include Asp-32, Gln-40, Tyr-45, Val-85, Phe-120, Asp-287, and Thr-327.

It belongs to the ferredoxin--NADP reductase type 2 family. Homodimer. Requires FAD as cofactor.

The enzyme catalyses 2 reduced [2Fe-2S]-[ferredoxin] + NADP(+) + H(+) = 2 oxidized [2Fe-2S]-[ferredoxin] + NADPH. The chain is Ferredoxin--NADP reductase from Wolbachia sp. subsp. Brugia malayi (strain TRS).